The chain runs to 187 residues: Protein GrpE (187 aa).

A compositionally biased stretch (basic and acidic residues) spans 1–11 (MTDSSNEHETE). Residues 1 to 21 (MTDSSNEHETENPSLPIPDNE) form a disordered region.

The protein belongs to the GrpE family. In terms of assembly, homodimer.

The protein resides in the cytoplasm. In terms of biological role, participates actively in the response to hyperosmotic and heat shock by preventing the aggregation of stress-denatured proteins, in association with DnaK and GrpE. It is the nucleotide exchange factor for DnaK and may function as a thermosensor. Unfolded proteins bind initially to DnaJ; upon interaction with the DnaJ-bound protein, DnaK hydrolyzes its bound ATP, resulting in the formation of a stable complex. GrpE releases ADP from DnaK; ATP binding to DnaK triggers the release of the substrate protein, thus completing the reaction cycle. Several rounds of ATP-dependent interactions between DnaJ, DnaK and GrpE are required for fully efficient folding. This is Protein GrpE from Chlamydia caviae (strain ATCC VR-813 / DSM 19441 / 03DC25 / GPIC) (Chlamydophila caviae).